The sequence spans 420 residues: Pre-mRNA-splicing factor RBM22 (420 aa).

The segment at 159–186 (RNRPHICSFWVKGECKRGEECPYRHEKP) adopts a C3H1-type zinc-finger fold. An RRM domain is found at 232–305 (TTLYVGGLGD…RRLNVKWGRS (74 aa)). 2 disordered regions span residues 303–343 (GRSQ…AAEE) and 372–420 (APPP…HSSP). Residues 309–318 (RGKEKDKEGT) are compositionally biased toward basic and acidic residues.

It belongs to the SLT11 family. Component of the pre-catalytic and catalytic spliceosome complexes. Component of the postcatalytic spliceosome P complex.

The protein resides in the nucleus. It localises to the cytoplasm. Its function is as follows. Required for pre-mRNA splicing as component of the activated spliceosome. Involved in the first step of pre-mRNA splicing. Binds directly to the internal stem-loop (ISL) domain of the U6 snRNA and to the pre-mRNA intron near the 5' splice site during the activation and catalytic phases of the spliceosome cycle. This is Pre-mRNA-splicing factor RBM22 (RBM22) from Gallus gallus (Chicken).